We begin with the raw amino-acid sequence, 109 residues long: Nucleoid-associated protein BU482 (109 aa).

Belongs to the YbaB/EbfC family. Homodimer.

It is found in the cytoplasm. Its subcellular location is the nucleoid. Its function is as follows. Binds to DNA and alters its conformation. May be involved in regulation of gene expression, nucleoid organization and DNA protection. This is Nucleoid-associated protein BU482 from Buchnera aphidicola subsp. Acyrthosiphon pisum (strain APS) (Acyrthosiphon pisum symbiotic bacterium).